Reading from the N-terminus, the 154-residue chain is Endoribonuclease YbeY (154 aa).

Positions 113, 117, and 123 each coordinate Zn(2+).

The protein belongs to the endoribonuclease YbeY family. Zn(2+) is required as a cofactor.

Its subcellular location is the cytoplasm. Functionally, single strand-specific metallo-endoribonuclease involved in late-stage 70S ribosome quality control and in maturation of the 3' terminus of the 16S rRNA. The polypeptide is Endoribonuclease YbeY (Ehrlichia canis (strain Jake)).